The chain runs to 520 residues: Bifunctional dihydrofolate reductase-thymidylate synthase (520 aa).

A DHFR domain is found at 26-229; it reads AFSIVVALDK…LEFEICKYVP (204 aa). A substrate-binding site is contributed by Val30. Residues Ala32 and 38-44 each bind NADP(+); that span reads GIGDGES. Residue Asp52 participates in substrate binding. Residues 81–83, 102–105, and 157–164 contribute to the NADP(+) site; these read RKT, LSSK, and GGAQVYAD. 2 residues coordinate substrate: Tyr162 and Thr180. Residues 234 to 520 are thymidylate synthase; the sequence is ERQYLELIDR…HPPIKMEMAV (287 aa). DUMP is bound at residue Arg254. The active site involves Cys400. DUMP-binding positions include His401, 421–425, Asn433, and 463–465; these read QRSCD and HVY.

It in the N-terminal section; belongs to the dihydrofolate reductase family. This sequence in the C-terminal section; belongs to the thymidylate synthase family.

The catalysed reaction is (6S)-5,6,7,8-tetrahydrofolate + NADP(+) = 7,8-dihydrofolate + NADPH + H(+). It carries out the reaction dUMP + (6R)-5,10-methylene-5,6,7,8-tetrahydrofolate = 7,8-dihydrofolate + dTMP. It functions in the pathway cofactor biosynthesis; tetrahydrofolate biosynthesis; 5,6,7,8-tetrahydrofolate from 7,8-dihydrofolate: step 1/1. Its function is as follows. Bifunctional enzyme. Involved in de novo dTMP biosynthesis. Key enzyme in folate metabolism. Catalyzes an essential reaction for de novo glycine and purine synthesis, DNA precursor synthesis, and for the conversion of dUMP to dTMP. This is Bifunctional dihydrofolate reductase-thymidylate synthase from Leishmania amazonensis.